Here is a 279-residue protein sequence, read N- to C-terminus: Ribonuclease Z (279 aa).

Zn(2+)-binding residues include His64, His66, Asp68, His69, His134, Asp191, and His245. Residue Asp68 is the Proton acceptor of the active site.

Belongs to the RNase Z family. As to quaternary structure, homodimer. The cofactor is Zn(2+).

It catalyses the reaction Endonucleolytic cleavage of RNA, removing extra 3' nucleotides from tRNA precursor, generating 3' termini of tRNAs. A 3'-hydroxy group is left at the tRNA terminus and a 5'-phosphoryl group is left at the trailer molecule.. Its function is as follows. Zinc phosphodiesterase, which displays some tRNA 3'-processing endonuclease activity. Probably involved in tRNA maturation, by removing a 3'-trailer from precursor tRNA. The polypeptide is Ribonuclease Z (Methanopyrus kandleri (strain AV19 / DSM 6324 / JCM 9639 / NBRC 100938)).